Consider the following 600-residue polypeptide: Potassium-transporting ATPase potassium-binding subunit (600 aa).

11 consecutive transmembrane segments (helical) span residues 6–26, 65–85, 136–156, 179–199, 283–303, 314–334, 367–387, 419–439, 458–478, 523–543, and 566–586; these read IILL…LGTY, GYAI…YAVQ, ALSG…YALI, LYVL…QGVI, FSNL…CFTF, WAIL…VMGA, FGIS…CGAV, GLYG…LMIG, SLVI…AVVL, VMLA…VLAI, and LFIA…YVPA.

It belongs to the KdpA family. The system is composed of three essential subunits: KdpA, KdpB and KdpC.

The protein resides in the cell inner membrane. Its function is as follows. Part of the high-affinity ATP-driven potassium transport (or Kdp) system, which catalyzes the hydrolysis of ATP coupled with the electrogenic transport of potassium into the cytoplasm. This subunit binds the periplasmic potassium ions and delivers the ions to the membrane domain of KdpB through an intramembrane tunnel. The polypeptide is Potassium-transporting ATPase potassium-binding subunit (Janthinobacterium sp. (strain Marseille) (Minibacterium massiliensis)).